Consider the following 433-residue polypeptide: MAEKSFKYVIVGGGVSAGYAAREFAKQGVKPGELAIISKEAVAPYERPALSKAYLFPEGAARLPGFHVCVGSGGERQLPEWYAEKGISLILSTEIVKADLASKTLVSAAGESFKYQTLVIATGTTVLKLSDFGVQGADSKNIFYLREIDDADQLVEALKAKKNGKAVVVGGGYIGLELSAVLRLNNIEVNMVYPEPWCMPRLFTEGIAAFYEGYYKNKGVNIIKGTVAVGFDTHPNGEVKEVKLKDGRVLEADIVVVGVGARPLTTLFKGQVEEEKGGIKTDAFFKTSVPDVYAVGDVATFPLKMYNEIRRVEHVDHSRKSAEQAVKAIFASEQGKSVDEYDYLPYFYSRAFDLSWQFYGDNVGETVLFGDADPNSATHKFGQYWIKDGKIVGAFLESGSPEENKAIAKVAKVQPPATLDQLAQEGISFASKI.

FAD contacts are provided by residues 13–16, Glu-40, Arg-47, Lys-52, Ile-95, and 146–147; these read GGVS and RE. Residues 171-177, Glu-195, Arg-201, and Gly-260 contribute to the NAD(+) site; that span reads GGYIGLE. 173-177 is a binding site for NADP(+); sequence YIGLE. NADP(+)-binding residues include Arg-201 and Gly-260. An FAD-binding site is contributed by Asp-297. 313-314 provides a ligand contact to NAD(+); sequence EH. 313–314 lines the NADP(+) pocket; sequence EH. Position 315 (Val-315) interacts with FAD. Arg-319 provides a ligand contact to L-ascorbate. Residue Tyr-348 participates in FAD binding. Tyr-348 contributes to the NAD(+) binding site. Tyr-348 is a binding site for NADP(+). Arg-350 is an L-ascorbate binding site.

This sequence belongs to the FAD-dependent oxidoreductase family. Requires FAD as cofactor. Expressed in leaves, and to a lesser degree in stems, roots and all stages of fruit.

It localises to the cytoplasm. The enzyme catalyses 2 monodehydro-L-ascorbate radical + NADH + H(+) = 2 L-ascorbate + NAD(+). In terms of biological role, catalyzes the conversion of monodehydroascorbate to ascorbate, oxidizing NADH in the process. This Solanum lycopersicum (Tomato) protein is Monodehydroascorbate reductase.